The primary structure comprises 813 residues: Phenylalanine--tRNA ligase beta subunit (813 aa).

One can recognise a tRNA-binding domain in the interval 42-151 (AKDFNHVVIG…ADAPVGKAYA (110 aa)). In terms of domain architecture, B5 spans 405–480 (VKKAPVDITI…RLNGYEHIPE (76 aa)). Residues aspartate 458, aspartate 464, glutamate 467, and glutamate 468 each contribute to the Mg(2+) site. Residues 720–813 (SKFPIVERDF…LKKNFDLSVR (94 aa)) enclose the FDX-ACB domain.

This sequence belongs to the phenylalanyl-tRNA synthetase beta subunit family. Type 1 subfamily. As to quaternary structure, tetramer of two alpha and two beta subunits. The cofactor is Mg(2+).

The protein localises to the cytoplasm. The catalysed reaction is tRNA(Phe) + L-phenylalanine + ATP = L-phenylalanyl-tRNA(Phe) + AMP + diphosphate + H(+). In Bdellovibrio bacteriovorus (strain ATCC 15356 / DSM 50701 / NCIMB 9529 / HD100), this protein is Phenylalanine--tRNA ligase beta subunit.